The chain runs to 916 residues: MASFRAMTIQQPISVPVPQEATPAEAPAKLTPMMEQYLDIKAAHPGLMLFYRMGDFYELFFEDAEVASKALGIVLTKRGKHQGQDIPMCGVPVERSEDYLHRLIAQGIRVAVCEQMEDPAAARARGNKSVVKRGVVRVVTPGTLTEDNLLDARANNYLLSIARSRGSSGGDRLGLAWIDISTSDFIVTECAFAELTATLARINPNEVIVSDALYSDEAFEPVLRELAAVTPLTRDVFDGATAERRLCDYFAVATMDGLAVLSRLEATAAAACVTYVERTQVGQRPPLAPPAREATGSTMAIDPATRANLELTRTLAGERRGSLLDAIDCTVTSAGSRLLAQRLAAPLTEPAQIGRRLDAVNAFVADSAAREDIRVILRGAPDMTRAMARLSVGRGGPRDLAALRDGILAADQALARLSVLDQPPQEIASVMAALARPARALADEFARALDEQLPLIKRDGGFVRSGYDATLDETRNLRDASRLVVASMQARYADQTGVKALKIRHNNVLGYFVEVTAQHGDKLMSAPLNATFIHRQTLAGQVRFTTSELGEIEAKIANAGERALNLELEIFDRLCAQALAIGDDLRAAAHGFAMLDVATALAKLALDDNYVRPEVDGSLGFAIEGGRHPVVEQSLKREGQPFIANSCDLSPTPGHKSGQLWLLTGPNMAGKSTFLRQNALIALLAQIGSFVPASRARIGIVDRLFSRVGAADDLARGRSTFMVEMVETAAILNQAGERALVILDEIGRGTATFDGLSIAWAAIEHLHESNRCRTLFATHYHELTALAAKLPRLFNATVRVKEWQGDVVFLHEVLPGSADRSYGIQVAKLAGLPPAVISRAKSVLAKLEAADRGQNARALVDDLPLFAVPSRAAVEPAMSKETEELIAAVKDLHPDEMTPREALDALYRLKAKLPAK.

665–672 (GPNMAGKS) contacts ATP.

It belongs to the DNA mismatch repair MutS family.

Functionally, this protein is involved in the repair of mismatches in DNA. It is possible that it carries out the mismatch recognition step. This protein has a weak ATPase activity. The polypeptide is DNA mismatch repair protein MutS (Bradyrhizobium sp. (strain ORS 278)).